An 857-amino-acid chain; its full sequence is MDDRYDPQVIEAKWQQEWAARQLDRTDTDPQKPKFYALSMFPYPSGNLHMGHVRNYTITDVIARCRRMQGYRVLHPMGWDAFGLPAENAAIERGIHPRVWTQQNIGQMRQELQRLGLSYDWEREVTTCHPDYYRWTQWLFLEFFEAGLAYQKEAAVNWDPVDQTVLANEQVDSEGRSWRSGALVERRLLKQWFLKITAYAEELLNDLEQLTGWPERVKLMQANWIGQSRGAYLEFPIVGSDEKIGVFTTRPDTVYGVTYVVLAPEHPLTLKVTTSRRRKTVEAFIASVQQESELERTAGDRPKRGVATGGKALNPFTGEEIPIWIANYVLYEYGTGAVMGVPAHDERDFQFAKAHRLPIRQVIIPPDGKASTRLRAAYTEPGKLINSGQFDGMDSTAAKVAITEYATAQGWGREHVQYRLRDWLISRQRYWGVPIPIIHCPQCGPVPVPRSELPVLLPEEVEFTGRGPSPLAKLAAWRDVPCPKCGGPAQRETDTMDTFIDSSWYYFRYADARNSEAPFDPAAIKDWLPVDQYVGGIEHAILHLLYSRFFTKVLRDRQLVHVSEPFQRLLTQGMVQGRTYKNPRTGKYVIPSRIADLNQPTDPDTGEALEVVYEKMSKSKYNGVAPGDVIQQYGADTARMFILFKAPPEKDLEWDDADVEGQFRFLNRVWRLVQTFKAKGGRLGQPLPATLTKAEKDLRRAIHTAIKEISEDIEGDYQLNTAVAELMKLSNALSSADCYTSGVYSEGIQTLLTLLAPFAPHISEELWHQLGGTDSIHRQPWPKADPTALVADEITLVIQVMGKTRGAIQVPATASQAELEEAAQHSEIGQRYLAGKTIKKIIVVPGKLVNFVLESSR.

Positions 42-52 match the 'HIGH' region motif; it reads PYPSGNLHMGH. The 'KMSKS' region signature appears at 615 to 619; the sequence is KMSKS. Lys-618 contributes to the ATP binding site.

The protein belongs to the class-I aminoacyl-tRNA synthetase family.

Its subcellular location is the cytoplasm. It carries out the reaction tRNA(Leu) + L-leucine + ATP = L-leucyl-tRNA(Leu) + AMP + diphosphate. The polypeptide is Leucine--tRNA ligase (Thermosynechococcus vestitus (strain NIES-2133 / IAM M-273 / BP-1)).